Here is a 507-residue protein sequence, read N- to C-terminus: WD-40 repeat-containing protein MSI4 (507 aa).

Met1 bears the N-acetylmethionine mark. The segment at Met1 to Glu66 is disordered. 3 WD repeats span residues Arg95–Val137, Ile162–Ala202, and Gly217–Gly257. Polar residues predominate over residues Thr258–Glu272. The interval Thr258 to Val282 is disordered. WD repeat units follow at residues Gly290–Thr330, Ala335–Val375, Gly384–Asp424, and Gly439–Glu486. Positions Phe308–Arg323 match the DWD box motif.

Belongs to the WD repeat RBAP46/RBAP48/MSI1 family. In terms of assembly, interacts with AHL16 and HOS1. Interacts with LHP1, PDP1, PDP2 and PDP3. Component of the PRC2 (polycomb repressive complex 2) complex which regulates histone methylation on histone H3K27. In terms of tissue distribution, expressed in rosette leaves, cauline leaves, main stems and developing fruits. Expressed at higher levels in roots and flowers.

It localises to the nucleus. Core histone-binding subunit that may target chromatin assembly factors, chromatin remodeling factors and histone deacetylases to their histone substrates in a manner that is regulated by nucleosomal DNA. Component of the flowering autonomous pathway which positively regulates flowering by promoting transcriptional repression of the flowering repressor FLC. May promote histone deacetylation at the FLC locus leading to the formation of repressive chromatin structures. Forms a histone deacetylase complex with HDA5, HDA6 and FLD that represses FLC gene expression to control flowering time. Also negatively regulates cold-responsive genes. Acts together with PDP1 and MSI5 to regulate the function of the PRC2 complex on FLC. Required for systemic acquired resistance (SAR) toward pathogenic bacteria (e.g. Pseudomonas syringae pv tomato DC3000 (avrPto)). Together with FLD and MSI4/FVE, contributes to dehydroabietinal-dependent (DA, a diterpenoid tricyclic diterpene) activation of flowering ans SAR. The sequence is that of WD-40 repeat-containing protein MSI4 from Arabidopsis thaliana (Mouse-ear cress).